Reading from the N-terminus, the 301-residue chain is Homoserine O-acetyltransferase (301 aa).

Cys142 (acyl-thioester intermediate) is an active-site residue. Residues Lys163 and Ser192 each coordinate substrate. His235 (proton acceptor) is an active-site residue. Glu237 is a catalytic residue. Arg249 contributes to the substrate binding site.

This sequence belongs to the MetA family.

The protein resides in the cytoplasm. The catalysed reaction is L-homoserine + acetyl-CoA = O-acetyl-L-homoserine + CoA. Its pathway is amino-acid biosynthesis; L-methionine biosynthesis via de novo pathway; O-acetyl-L-homoserine from L-homoserine: step 1/1. Its function is as follows. Transfers an acetyl group from acetyl-CoA to L-homoserine, forming acetyl-L-homoserine. The protein is Homoserine O-acetyltransferase of Bacillus cereus (strain ATCC 14579 / DSM 31 / CCUG 7414 / JCM 2152 / NBRC 15305 / NCIMB 9373 / NCTC 2599 / NRRL B-3711).